Reading from the N-terminus, the 532-residue chain is Autoinducer-2 kinase (532 aa).

This sequence belongs to the FGGY kinase family.

It localises to the cytoplasm. It catalyses the reaction (S)-4,5-dihydroxypentane-2,3-dione + ATP = (2S)-2-hydroxy-3,4-dioxopentyl phosphate + ADP + H(+). Catalyzes the phosphorylation of autoinducer-2 (AI-2) to phospho-AI-2, which subsequently inactivates the transcriptional regulator LsrR and leads to the transcription of the lsr operon. Phosphorylates the ring-open form of (S)-4,5-dihydroxypentane-2,3-dione (DPD), which is the precursor to all AI-2 signaling molecules, at the C5 position. The protein is Autoinducer-2 kinase of Klebsiella pneumoniae subsp. pneumoniae (strain ATCC 700721 / MGH 78578).